The primary structure comprises 252 residues: Protein lin-28 homolog B (252 aa).

Residues 1-30 (MAEGGAARGTREEQGKLPEQEEEEEEDPQV) are disordered. The segment covering 9–19 (GTREEQGKLPE) has biased composition (basic and acidic residues). Positions 32–105 (LGSGHCKWFN…GFESLRVTGP (74 aa)) constitute a CSD domain. 2 consecutive CCHC-type zinc fingers follow at residues 130 to 147 (DRCY…ECNL) and 152 to 169 (KKCH…NCPH). Residues C132, C135, H140, C145, C154, C157, H162, and C167 each coordinate Zn(2+). Positions 172 to 252 (VPQHPTTSQG…KGPSVQKKKK (81 aa)) are disordered. Over residues 213 to 222 (GRSELSERSS) the composition is skewed to basic and acidic residues. Residues 225–238 (PQEASLSKISTSPE) show a composition bias toward polar residues.

Belongs to the lin-28 family.

The protein localises to the nucleus. It localises to the nucleolus. Functionally, suppressor of specific microRNA (miRNA) biogenesis. Binds target primary miRNA transcripts and sequester them in the nucleolus, away from the microprocessor complex, hence preventing their processing into mature miRNA. The specific interaction with target pri-miRNAs occurs via an 5'-GGAG-3' motif in the pre-miRNA terminal loop. The protein is Protein lin-28 homolog B (lin28b) of Xenopus laevis (African clawed frog).